Here is a 148-residue protein sequence, read N- to C-terminus: Transcriptional regulator MraZ (148 aa).

SpoVT-AbrB domains are found at residues 5-53 (ETAI…AESE) and 82-125 (AAHL…SEQA).

This sequence belongs to the MraZ family. In terms of assembly, forms oligomers.

The protein resides in the cytoplasm. It is found in the nucleoid. The sequence is that of Transcriptional regulator MraZ from Stenotrophomonas maltophilia (strain R551-3).